Reading from the N-terminus, the 68-residue chain is U-actitoxin-Avt1 (68 aa).

The N-terminal stretch at 1–22 is a signal peptide; that stretch reads MNSKAIISVFLIMLVVVSCTQA. Positions 23–40 are excised as a propeptide; that stretch reads TYETEDDDEPGPRHSEKR. The interval 24 to 50 is disordered; sequence YETEDDDEPGPRHSEKRSCARGCGGDS. Basic and acidic residues predominate over residues 32–41; that stretch reads PGPRHSEKRS. 3 disulfide bridges follow: cysteine 42/cysteine 54, cysteine 46/cysteine 59, and cysteine 52/cysteine 66.

Its function is as follows. Stable protein with probable toxin activity. Does not show activity on all channels tested. Shows no hemolytic activity on rat erythrocytes. In Aulactinia veratra (Green snakelock anemone), this protein is U-actitoxin-Avt1.